Consider the following 228-residue polypeptide: Prolactin-2B1 (228 aa).

An N-terminal signal peptide occupies residues 1–31 (MLLYLPQIFSSRASSLLFLVPYLLFWENVAS). Intrachain disulfides connect Cys-89/Cys-194 and Cys-203/Cys-228. N-linked (GlcNAc...) asparagine glycosylation is present at Asn-173.

The protein belongs to the somatotropin/prolactin family. As to expression, expression restricted to the placenta in trophoblast cells within the labyrinth zone.

The protein resides in the secreted. In Rattus norvegicus (Rat), this protein is Prolactin-2B1 (Prl2b1).